Reading from the N-terminus, the 567-residue chain is Urease subunit alpha (567 aa).

The region spanning 129-567 is the Urease domain; it reads GGIDTHIHFI…LPMAQRYFLF (439 aa). The Ni(2+) site is built by histidine 134, histidine 136, and lysine 217. The residue at position 217 (lysine 217) is an N6-carboxylysine. Histidine 219 contacts substrate. Ni(2+) is bound by residues histidine 246 and histidine 272. The active-site Proton donor is the histidine 320. Ni(2+) is bound at residue aspartate 360.

The protein belongs to the metallo-dependent hydrolases superfamily. Urease alpha subunit family. As to quaternary structure, probable heterotrimer of UreA (gamma), UreB (beta) and UreC (alpha) subunits. Three heterotrimers associate to form the active enzyme. The trimeric urease interacts with an accessory complex composed of UreD, UreF and UreG, which is required for the assembly of the nickel containing metallocenter of UreC. The UreE protein may also play a direct role in nickel transfer to the urease apoprotein. It depends on Ni cation as a cofactor. Post-translationally, carboxylation allows a single lysine to coordinate two nickel ions.

The protein localises to the cytoplasm. The catalysed reaction is urea + 2 H2O + H(+) = hydrogencarbonate + 2 NH4(+). It participates in nitrogen metabolism; urea degradation; CO(2) and NH(3) from urea (urease route): step 1/1. The polypeptide is Urease subunit alpha (Proteus mirabilis (strain HI4320)).